The following is a 569-amino-acid chain: 2-succinyl-5-enolpyruvyl-6-hydroxy-3-cyclohexene-1-carboxylate synthase (569 aa).

The protein belongs to the TPP enzyme family. MenD subfamily. Homodimer. Requires Mg(2+) as cofactor. Mn(2+) is required as a cofactor. Thiamine diphosphate serves as cofactor.

The enzyme catalyses isochorismate + 2-oxoglutarate + H(+) = 5-enolpyruvoyl-6-hydroxy-2-succinyl-cyclohex-3-ene-1-carboxylate + CO2. It participates in quinol/quinone metabolism; 1,4-dihydroxy-2-naphthoate biosynthesis; 1,4-dihydroxy-2-naphthoate from chorismate: step 2/7. Its pathway is cofactor biosynthesis; phylloquinone biosynthesis. Catalyzes the thiamine diphosphate-dependent decarboxylation of 2-oxoglutarate and the subsequent addition of the resulting succinic semialdehyde-thiamine pyrophosphate anion to isochorismate to yield 2-succinyl-5-enolpyruvyl-6-hydroxy-3-cyclohexene-1-carboxylate (SEPHCHC). This Microcystis aeruginosa (strain NIES-843 / IAM M-2473) protein is 2-succinyl-5-enolpyruvyl-6-hydroxy-3-cyclohexene-1-carboxylate synthase.